The primary structure comprises 112 residues: MTYVVTDNCIACKYTDCVEVCPVDCFYEGENTLVIHPDECIDCGVCEPECPADAIRPDTEPGMEDWVEFNRTYASQWPVITIKKDPMPDHKKYDGETGKREKYFSPNPGTGD.

4Fe-4S ferredoxin-type domains are found at residues 2-30 (TYVV…YEGE) and 31-60 (NTLV…PDTE). Residues Cys9 and Cys17 each coordinate [3Fe-4S] cluster. 4 residues coordinate [4Fe-4S] cluster: Cys21, Cys40, Cys43, and Cys46. Cys50 serves as a coordination point for [3Fe-4S] cluster. Over residues 85 to 103 (DPMPDHKKYDGETGKREKY) the composition is skewed to basic and acidic residues. Residues 85–112 (DPMPDHKKYDGETGKREKYFSPNPGTGD) form a disordered region.

[4Fe-4S] cluster serves as cofactor. Requires [3Fe-4S] cluster as cofactor.

Functionally, ferredoxins are iron-sulfur proteins that transfer electrons in a wide variety of metabolic reactions. This chain is Ferredoxin-2 (fdxA), found in Rhodobacter capsulatus (strain ATCC BAA-309 / NBRC 16581 / SB1003).